We begin with the raw amino-acid sequence, 251 residues long: Probable transcriptional regulatory protein Francci3_1368 (251 aa).

The protein belongs to the TACO1 family.

It localises to the cytoplasm. In Frankia casuarinae (strain DSM 45818 / CECT 9043 / HFP020203 / CcI3), this protein is Probable transcriptional regulatory protein Francci3_1368.